Here is a 301-residue protein sequence, read N- to C-terminus: Cytosolic sulfotransferase 2 (301 aa).

Lys-53 to Trp-58 is a binding site for 3'-phosphoadenylyl sulfate. His-115 functions as the Proton acceptor in the catalytic mechanism. 3'-phosphoadenylyl sulfate-binding positions include Arg-137, Ser-145, Tyr-201, Val-235–Met-240, and Arg-263–Gly-265.

It belongs to the sulfotransferase 1 family. As to expression, expressed in liver.

It localises to the cytoplasm. Its activity is regulated as follows. Inhibited by Co(2+), Zn(2+), Cd(2+) and Pb(2+) ions. Inactivated by Hg(2+) and Cu(2+) ions. In terms of biological role, sulfotransferase that utilizes 3'-phospho-5'-adenylyl sulfate (PAPS) as sulfonate donor to catalyze the sulfate conjugation of a variety of xenobiotic and endogenous compounds, including 2-naphthol, hydroxychlorobiphenyls, T3 (triiodo-L-thyronine), T4 (thyroxine), estrone and DOPA. This is Cytosolic sulfotransferase 2 from Danio rerio (Zebrafish).